Here is a 183-residue protein sequence, read N- to C-terminus: MDVLELYRRTGALLEGHFLLRSGMHSPFFLQSAALLQHPLYAEAVGEALGKLFEDEKVDFVIAPAIGGVVLSFVVAKALGARALFAEKDGRGGMLIRKGLTVNPGDRFLAVEDVVTTGESVRKAIRAAEARGGVLVGVGAIVDRSGGRAAFGVPFRALLALEVPQYPEEACPLCREGVPLEEV.

5-phospho-alpha-D-ribose 1-diphosphate-binding positions include arginine 21, lysine 88, and 112-120; that span reads EDVVTTGES. The orotate site is built by threonine 116 and arginine 144.

The protein belongs to the purine/pyrimidine phosphoribosyltransferase family. PyrE subfamily. Homodimer. Mg(2+) serves as cofactor.

It carries out the reaction orotidine 5'-phosphate + diphosphate = orotate + 5-phospho-alpha-D-ribose 1-diphosphate. It functions in the pathway pyrimidine metabolism; UMP biosynthesis via de novo pathway; UMP from orotate: step 1/2. Functionally, catalyzes the transfer of a ribosyl phosphate group from 5-phosphoribose 1-diphosphate to orotate, leading to the formation of orotidine monophosphate (OMP). This chain is Orotate phosphoribosyltransferase, found in Thermus thermophilus (strain ATCC BAA-163 / DSM 7039 / HB27).